Here is a 509-residue protein sequence, read N- to C-terminus: Maturase K (509 aa).

It belongs to the intron maturase 2 family. MatK subfamily.

It localises to the plastid. Its subcellular location is the chloroplast. Functionally, usually encoded in the trnK tRNA gene intron. Probably assists in splicing its own and other chloroplast group II introns. The protein is Maturase K of Chamaecyparis obtusa (Hinoki false-cypress).